We begin with the raw amino-acid sequence, 338 residues long: Aspartate-semialdehyde dehydrogenase (338 aa).

NADP(+) is bound by residues 13-16 (SGAV) and 41-42 (RS). Arg101 provides a ligand contact to phosphate. Cys132 (acyl-thioester intermediate) is an active-site residue. Gln159 provides a ligand contact to substrate. NADP(+) contacts are provided by residues 162–163 (SG) and Pro187. Lys216 is a binding site for phosphate. Residue Arg238 participates in substrate binding. The active-site Proton acceptor is His245. Asn317 lines the NADP(+) pocket.

This sequence belongs to the aspartate-semialdehyde dehydrogenase family. Homodimer.

The catalysed reaction is L-aspartate 4-semialdehyde + phosphate + NADP(+) = 4-phospho-L-aspartate + NADPH + H(+). Its pathway is amino-acid biosynthesis; L-lysine biosynthesis via DAP pathway; (S)-tetrahydrodipicolinate from L-aspartate: step 2/4. It participates in amino-acid biosynthesis; L-methionine biosynthesis via de novo pathway; L-homoserine from L-aspartate: step 2/3. It functions in the pathway amino-acid biosynthesis; L-threonine biosynthesis; L-threonine from L-aspartate: step 2/5. Functionally, catalyzes the NADPH-dependent formation of L-aspartate-semialdehyde (L-ASA) by the reductive dephosphorylation of L-aspartyl-4-phosphate. This Shewanella sp. (strain DB6705) protein is Aspartate-semialdehyde dehydrogenase.